The following is a 446-amino-acid chain: ATP synthase subunit b-delta (446 aa).

Residues 1-168 (MSTFIGQLFG…PATADVDYPL (168 aa)) are ATP synthase subunit b. The chain crosses the membrane as a helical span at residues 4–24 (FIGQLFGFAVIVYLVWRFIVP). The tract at residues 169-446 (LAKMRSASRR…LAAAEARLPD (278 aa)) is ATP synthase subunit delta.

The protein in the N-terminal section; belongs to the ATPase B chain family. In the C-terminal section; belongs to the ATPase delta chain family. As to quaternary structure, F-type ATPases have 2 components, F(1) - the catalytic core - and F(0) - the membrane proton channel. F(1) has five subunits: alpha(3), beta(3), gamma(1), delta(1), epsilon(1). F(0) has three main subunits: a(1), b(2) and c(10-14). The alpha and beta chains form an alternating ring which encloses part of the gamma chain. F(1) is attached to F(0) by a central stalk formed by the gamma and epsilon chains, while a peripheral stalk is formed by the delta and b chains.

The protein localises to the cell membrane. In terms of biological role, f(1)F(0) ATP synthase produces ATP from ADP in the presence of a proton or sodium gradient. F-type ATPases consist of two structural domains, F(1) containing the extramembraneous catalytic core and F(0) containing the membrane proton channel, linked together by a central stalk and a peripheral stalk. During catalysis, ATP synthesis in the catalytic domain of F(1) is coupled via a rotary mechanism of the central stalk subunits to proton translocation. Its function is as follows. This fusion protein includes a component of the F(0) channel (subunit b) and of the F(1) subunit (subunit delta). Two copies of subunit b and one of delta together form the peripheral 'stator' stalk which links F(1) to F(0). This Mycobacterium bovis (strain ATCC BAA-935 / AF2122/97) protein is ATP synthase subunit b-delta (atpFH).